Here is a 104-residue protein sequence, read N- to C-terminus: UPF0213 protein ORF82 (104 aa).

The GIY-YIG domain occupies 7–83 (KVWCVYIVRR…KRKRGKYFKL (77 aa)).

It belongs to the UPF0213 family.

This chain is UPF0213 protein ORF82, found in Orgyia pseudotsugata (Douglas-fir tussock moth).